We begin with the raw amino-acid sequence, 333 residues long: Phosphate acyltransferase (333 aa).

The protein belongs to the PlsX family. As to quaternary structure, homodimer. Probably interacts with PlsY.

Its subcellular location is the cytoplasm. The enzyme catalyses a fatty acyl-[ACP] + phosphate = an acyl phosphate + holo-[ACP]. It functions in the pathway lipid metabolism; phospholipid metabolism. Its function is as follows. Catalyzes the reversible formation of acyl-phosphate (acyl-PO(4)) from acyl-[acyl-carrier-protein] (acyl-ACP). This enzyme utilizes acyl-ACP as fatty acyl donor, but not acyl-CoA. This Aliarcobacter butzleri (strain RM4018) (Arcobacter butzleri) protein is Phosphate acyltransferase.